A 482-amino-acid chain; its full sequence is MKEPLQKKKVVVRHLPPSLSQSDLLSQIDPRFADRYNWVSFRPGKSSYKNQKYSRAYVSFKAPEDVYEFAAFFNGHVFVNEKGAQFKAIVEYAPSQRVPKPSDKKDPREGSISKDPDYLEFLKVIAQPVENLPSAEIQLERREAEQSGASKAAPIVTPLMEFIRQKRATVMGPQGLSDIRRGGRRTRVVSANKPSPRPSKRNSEKKKYVEKESSKNVPRKTTADVSSSKPDYRQSNSSGKELPGNETAAIIDSSPPGIALTMDSGKKKILLLRSKDRDNPDNPPPQPEQHIDTNLSRNSTDSRQNQKSDVGGRLIKGILLRNDSRPSQSSTFVQSEQRVEPSEAENYKRPSRPANTRAGKDYHTSGTISEKQERRTRNKDRPDRVMWAPRRDGSEDQPLSSAGNNGEVKDRMFSQRSGEVVNSSGGHTLENGSARHSSRRVGGRNRKEEVVIGEGKTSRRGSGGGPSSHEKQMWIQKPSSGT.

Positions 9–14 (KVVVRH) are binds to UPF2. Residues 9 to 219 (KVVVRHLPPS…EKESSKNVPR (211 aa)) form a necessary for interaction with UPF2 region. The interval 53–482 (YSRAYVSFKA…MWIQKPSSGT (430 aa)) is sufficient for association with EJC core. The tract at residues 173-482 (PQGLSDIRRG…MWIQKPSSGT (310 aa)) is disordered. Residues 201–214 (RNSEKKKYVEKESS) are compositionally biased toward basic and acidic residues. 3 stretches are compositionally biased toward polar residues: residues 223–239 (ADVS…NSSG), 292–308 (DTNL…NQKS), and 325–336 (RPSQSSTFVQSE). Basic and acidic residues-rich tracts occupy residues 337–348 (QRVEPSEAENYK) and 370–394 (EKQE…RDGS). The segment covering 414 to 435 (SQRSGEVVNSSGGHTLENGSAR) has biased composition (polar residues).

Belongs to the RENT3 family. Found in a post-splicing messenger ribonucleoprotein (mRNP) complex. Associates with the exon junction complex (EJC). Interacts with CPL1/FRY2.

It localises to the nucleus. It is found in the nucleolus. The protein resides in the cytoplasm. In terms of biological role, recruits UPF2 at the cytoplasmic side of the nuclear envelope and the subsequent formation of an UPF1-UPF2-UPF3 surveillance complex (including UPF1 bound to release factors at the stalled ribosome) is believed to activate NMD. Binds spliced mRNA upstream of exon-exon junctions. Involved in nonsense-mediated decay (NMD) of mRNAs containing premature stop codons (premature termination codon PTC) by associating with the nuclear exon junction complex (EJC) and serving as link between the EJC core and NMD machinery. Eliminates the production of nonsense-containing RNAs (ncRNAs). Required for plant development and adaptation to environmental stresses, including plant defense and response to wounding. This is Regulator of nonsense transcripts UPF3 from Arabidopsis thaliana (Mouse-ear cress).